A 475-amino-acid polypeptide reads, in one-letter code: MKMPFNIGLIHFVGVGGIGMSGIAEVFHNLGYKVQGSDHVDSANVERLRGKGINIQIGHHAENLGDAEVVVLSTAIKKTNPEYIAAKEKHLPIVRRAEMLAELMRFRRAIAVGGTHGKTTTTSMIAALLDAGRFDPMVINGGIINAYGTNARMGSGDWMVVEADESDGTFLKLPADIAVVTNIDREHLDHYGSFCAVREAFRQFVENVPFYGFAVLCLDHPEVQSLASRIDDRWVITYGTNPQADIRFLNLSMDGQKTHFDVFIRSRKTGKETELKNLVLPMSGQHNVSNATAAIAIAHELGISNESIKKGLAEFGGVKRRFTQTGSWRGIEIFDDYGHHPVEIKAVLYAARESAKGRVIAIVQPHRYSRLYHLFDDFAACFNDADTVLIAPIYGAGEAPIAGFGARELVEHIKMAGHRDVRLIHCLEDVVLIVSTFAKPGDYVVFLGAGNITQWAAALPHQLAVLDNNDEFSVD.

Residue 114 to 120 (GTHGKTT) participates in ATP binding.

This sequence belongs to the MurCDEF family.

Its subcellular location is the cytoplasm. It catalyses the reaction UDP-N-acetyl-alpha-D-muramate + L-alanine + ATP = UDP-N-acetyl-alpha-D-muramoyl-L-alanine + ADP + phosphate + H(+). Its pathway is cell wall biogenesis; peptidoglycan biosynthesis. Its function is as follows. Cell wall formation. The polypeptide is UDP-N-acetylmuramate--L-alanine ligase (Bartonella quintana (strain Toulouse) (Rochalimaea quintana)).